Consider the following 372-residue polypeptide: Solute carrier family 35 member F6 (372 aa).

Residues 1-18 (MAWTKYQLFLAGLMLVTG) form the signal peptide. Helical transmembrane passes span 48–68 (FVQA…FYLL) and 89–109 (LLFL…YVAL). One can recognise an EamA domain in the interval 105-160 (MYVALNMTSASSFQMLRGAVIIFTGLFSVAFLDRRLVPSQWLGILITIAGLVVVGL). N-linked (GlcNAc...) asparagine glycosylation occurs at Asn110. Helical transmembrane passes span 116 to 136 (SFQM…VAFL), 145 to 165 (WLGI…DLLS), 176 to 196 (VITG…QMVL), 211 to 231 (AVGI…VPMY), 261 to 281 (LIAL…FSGI), 293 to 312 (MVLD…ALGW), and 320 to 336 (ILGF…YNGL). Thr366 is modified (phosphothreonine).

Belongs to the SLC35F solute transporter family. In terms of assembly, interacts with SLC25A5.

The protein resides in the mitochondrion. Its subcellular location is the lysosome membrane. In terms of biological role, involved in the maintenance of mitochondrial membrane potential in pancreatic ductal adenocarcinoma (PDAC) cells. Promotes pancreatic ductal adenocarcinoma (PDAC) cell growth. May play a role as a nucleotide-sugar transporter. The polypeptide is Solute carrier family 35 member F6 (Slc35f6) (Rattus norvegicus (Rat)).